The primary structure comprises 265 residues: Mlc titration factor A (265 aa).

Zn(2+) contacts are provided by His111, His148, His152, and Glu211.

Belongs to the MtfA family. Interacts with Mlc. Zn(2+) serves as cofactor.

It localises to the cytoplasm. In terms of biological role, involved in the modulation of the activity of the glucose-phosphotransferase system (glucose-PTS). Interacts with the transcriptional repressor Mlc, preventing its interaction with DNA and leading to the modulation of expression of genes regulated by Mlc, including ptsG, which encodes the PTS system glucose-specific EIICB component. Its function is as follows. Shows zinc-dependent metallopeptidase activity. The polypeptide is Mlc titration factor A (Salmonella enteritidis PT4 (strain P125109)).